A 522-amino-acid chain; its full sequence is Monogalactosyldiacylglycerol synthase, chloroplastic (522 aa).

Residues 1-98 (MSHPSTVTSE…RIPLGFSSIG (98 aa)) constitute a chloroplast transit peptide.

It belongs to the glycosyltransferase 28 family. As to quaternary structure, homodimer. Requires Zn(2+) as cofactor.

It localises to the plastid. Its subcellular location is the chloroplast inner membrane. It catalyses the reaction a 1,2-diacyl-sn-glycerol + UDP-alpha-D-galactose = a 1,2-diacyl-3-O-(beta-D-galactosyl)-sn-glycerol + UDP + H(+). Its activity is regulated as follows. Inhibited by ortho-phenanthroline and UDP (competitive inhibitor relatively to UDP-Gal only) and inactivated by citraconic anhydride, tert-butoxycarbonyl-L-methionine hydrosuccinimidyl ester (SLR) and N-ethylmaleimide (NEM). Involved in the synthesis of the major structural component of photosynthetic membranes. The 1,2-diacylglycerol substrate preference is 18:2/18:2 &gt; 18:0/18:1 &gt; 18:1/18:1 &gt; 18:1/16:0 &gt; 16:0/18:2 &gt; 18:3/18:3 &gt; 16:0/18:1 &gt; 16:0/16:0 &gt; 18:0/18:0. This is Monogalactosyldiacylglycerol synthase, chloroplastic (MGD A) from Spinacia oleracea (Spinach).